A 669-amino-acid polypeptide reads, in one-letter code: Elongation factor G-like protein (669 aa).

The region spanning 7-279 is the tr-type G domain; the sequence is ESLRNVAIVG…VLIKEAPDPS (273 aa). The interval 16-23 is G1; that stretch reads GPYGSGKT. 16 to 23 is a GTP binding site; that stretch reads GPYGSGKT. The segment at 59 to 63 is G2; the sequence is QMSVE. Residues 80-83 form a G3 region; the sequence is DCPG. Residues 80–84 and 134–137 each bind GTP; these read DCPGS and NKMD. The segment at 134 to 137 is G4; it reads NKMD. Positions 257–259 are G5; sequence AAE.

Belongs to the TRAFAC class translation factor GTPase superfamily. Classic translation factor GTPase family. EF-G/EF-2 subfamily.

The sequence is that of Elongation factor G-like protein from Synechocystis sp. (strain ATCC 27184 / PCC 6803 / Kazusa).